Consider the following 257-residue polypeptide: Thiazole synthase (257 aa).

Lys96 functions as the Schiff-base intermediate with DXP in the catalytic mechanism. 1-deoxy-D-xylulose 5-phosphate-binding positions include Gly157, 184 to 185, and 206 to 207; these read AG and NT.

This sequence belongs to the ThiG family. As to quaternary structure, homotetramer. Forms heterodimers with either ThiH or ThiS.

The protein localises to the cytoplasm. The enzyme catalyses [ThiS sulfur-carrier protein]-C-terminal-Gly-aminoethanethioate + 2-iminoacetate + 1-deoxy-D-xylulose 5-phosphate = [ThiS sulfur-carrier protein]-C-terminal Gly-Gly + 2-[(2R,5Z)-2-carboxy-4-methylthiazol-5(2H)-ylidene]ethyl phosphate + 2 H2O + H(+). The protein operates within cofactor biosynthesis; thiamine diphosphate biosynthesis. Its function is as follows. Catalyzes the rearrangement of 1-deoxy-D-xylulose 5-phosphate (DXP) to produce the thiazole phosphate moiety of thiamine. Sulfur is provided by the thiocarboxylate moiety of the carrier protein ThiS. In vitro, sulfur can be provided by H(2)S. This is Thiazole synthase from Bartonella henselae (strain ATCC 49882 / DSM 28221 / CCUG 30454 / Houston 1) (Rochalimaea henselae).